The sequence spans 212 residues: MKGTFLVLRRVRGGDVDLVATLYGTAGKVSLFLREGYLNEKKLFGVFEPFNLVKIDYYQSSGLIIPRDVLEVKRFSYFAKDVKRYFLMSYISQTVLRHINFYDEELFSLILRFFLKETKNPEASYFKFFLNLLKTLGYEPLFLRERVRGRYAFLDLEKGSLSSSGVKVRSSLLNLLKKIHQLEEYERIKIKRKDFEEGREILEKFLSFHLNR.

This is an uncharacterized protein from Aquifex aeolicus (strain VF5).